A 427-amino-acid polypeptide reads, in one-letter code: Histidine--tRNA ligase (427 aa).

It belongs to the class-II aminoacyl-tRNA synthetase family. In terms of assembly, homodimer.

It localises to the cytoplasm. It carries out the reaction tRNA(His) + L-histidine + ATP = L-histidyl-tRNA(His) + AMP + diphosphate + H(+). The protein is Histidine--tRNA ligase of Alteromonas mediterranea (strain DSM 17117 / CIP 110805 / LMG 28347 / Deep ecotype).